We begin with the raw amino-acid sequence, 128 residues long: Fluoride-specific ion channel FluC (128 aa).

A run of 4 helical transmembrane segments spans residues Val4–Ile24, Phe37–Phe57, Thr65–Ser85, and Phe101–Ile121. Na(+) is bound by residues Gly76 and Thr79.

It belongs to the fluoride channel Fluc/FEX (TC 1.A.43) family.

The protein localises to the cell inner membrane. It carries out the reaction fluoride(in) = fluoride(out). Na(+) is not transported, but it plays an essential structural role and its presence is essential for fluoride channel function. Fluoride-specific ion channel. Important for reducing fluoride concentration in the cell, thus reducing its toxicity. The polypeptide is Fluoride-specific ion channel FluC (Desulfotalea psychrophila (strain LSv54 / DSM 12343)).